We begin with the raw amino-acid sequence, 371 residues long: Chaperone protein DnaJ (371 aa).

Residues 5-70 (CYYEILNVSK…SKRSRYDQFG (66 aa)) enclose the J domain. The CR-type zinc finger occupies 127-204 (GVEKEITIPR…CYGNGKVKKQ (78 aa)). The Zn(2+) site is built by cysteine 140, cysteine 143, cysteine 156, cysteine 159, cysteine 178, cysteine 181, cysteine 192, and cysteine 195. 4 CXXCXGXG motif repeats span residues 140-147 (CDSCDGTG), 156-163 (CHACHGQG), 178-185 (CPVCNGTG), and 192-199 (CDACYGNG).

Belongs to the DnaJ family. In terms of assembly, homodimer. The cofactor is Zn(2+).

It is found in the cytoplasm. Functionally, participates actively in the response to hyperosmotic and heat shock by preventing the aggregation of stress-denatured proteins and by disaggregating proteins, also in an autonomous, DnaK-independent fashion. Unfolded proteins bind initially to DnaJ; upon interaction with the DnaJ-bound protein, DnaK hydrolyzes its bound ATP, resulting in the formation of a stable complex. GrpE releases ADP from DnaK; ATP binding to DnaK triggers the release of the substrate protein, thus completing the reaction cycle. Several rounds of ATP-dependent interactions between DnaJ, DnaK and GrpE are required for fully efficient folding. Also involved, together with DnaK and GrpE, in the DNA replication of plasmids through activation of initiation proteins. This is Chaperone protein DnaJ from Francisella tularensis subsp. tularensis (strain WY96-3418).